The chain runs to 408 residues: Putative gustatory receptor 58b (408 aa).

At 1-44 (MLHPKLGRVMNVVYYHSVVFALMSTTLRIRSCRKCLRLEKVSRT) the chain is on the cytoplasmic side. Residues 45 to 65 (YTIYSFFVGIFLFLNLYFMVP) form a helical membrane-spanning segment. Residues 66–82 (RIMEDGYMKYNIVLQWN) lie on the Extracellular side of the membrane. Residues 83–103 (FFVMLFLRAIAVVSCYGTLWL) traverse the membrane as a helical segment. The Cytoplasmic portion of the chain corresponds to 104-150 (KRHKIIQLYKYSLIYWKRFGHITRAIVDKKELLDLQESLARIMIRKI). The chain crosses the membrane as a helical span at residues 151-171 (ILLYSAFLCSTVLQYQLLSVI). Residues 172 to 193 (NPQIFLAFCARLTHFLHFLCVK) lie on the Extracellular side of the membrane. A helical membrane pass occupies residues 194–214 (MGFFGVLVLLNHQFLVIHLAI). The Cytoplasmic portion of the chain corresponds to 215-245 (NALHGRKARKKWKALRSVAAMHLKTLRLARR). Residues 246-266 (IFDMFDIANATVFINMFMTAI) form a helical membrane-spanning segment. The Extracellular portion of the chain corresponds to 267–284 (NILYHAVQYSNSSIKSNG). Residue Asn277 is glycosylated (N-linked (GlcNAc...) asparagine). The helical transmembrane segment at 285–305 (WGILFGNGLIVFNFWGTMALM) threads the bilayer. The Cytoplasmic portion of the chain corresponds to 306-364 (EMLDSVVTSCNNTGQQLRQLSDLPKVGPKMQRELDVFTMQLRQNRLVYKICGIVELDKP). The chain crosses the membrane as a helical span at residues 365 to 385 (ACLSYIGSILSNVIILMQFDL). Residues 386–408 (RRQRQPINDRQYLIHLMKNKTKV) are Extracellular-facing. A glycan (N-linked (GlcNAc...) asparagine) is linked at Asn404.

Belongs to the insect chemoreceptor superfamily. Gustatory receptor (GR) family. Gr22e subfamily. As to expression, expressed in the adult labellar chemosensory neurons, labral sense organ and thorax. In larvae, is in neurons of the terminal external chemosensory organ as well as in the dorsal pharyngeal sense organ.

The protein resides in the cell membrane. Its function is as follows. Probable gustatory receptor which mediates acceptance or avoidance behavior, depending on its substrates. The polypeptide is Putative gustatory receptor 58b (Gr58b) (Drosophila melanogaster (Fruit fly)).